Consider the following 227-residue polypeptide: Large ribosomal subunit protein uL1 (227 aa).

This sequence belongs to the universal ribosomal protein uL1 family. In terms of assembly, part of the 50S ribosomal subunit.

Functionally, binds directly to 23S rRNA. The L1 stalk is quite mobile in the ribosome, and is involved in E site tRNA release. Its function is as follows. Protein L1 is also a translational repressor protein, it controls the translation of the L11 operon by binding to its mRNA. The sequence is that of Large ribosomal subunit protein uL1 from Mesoplasma florum (strain ATCC 33453 / NBRC 100688 / NCTC 11704 / L1) (Acholeplasma florum).